A 142-amino-acid polypeptide reads, in one-letter code: MVLSANDKTNVKTVFTKITGHAEDYGAETLERMFITYPPTKTYFPHFDLHHGSAQIKAHGKKVVGALIEAVNHIDDIAGALSKLSDLHAQKLRVDPVNFKLLGQCFLVVVAIHHPSVLTPEVHASLDKFLCAVGNVLTAKYR.

The region spanning 2–142 (VLSANDKTNV…VGNVLTAKYR (141 aa)) is the Globin domain. O2 is bound at residue His59. Heme b is bound at residue His88.

The protein belongs to the globin family. As to quaternary structure, heterotetramer of two alpha chains and two beta chains. Red blood cells.

Involved in oxygen transport from the lung to the various peripheral tissues. The protein is Hemoglobin subunit alpha-A (HBAA) of Aegypius monachus (Cinereous vulture).